A 179-amino-acid chain; its full sequence is Translation initiation factor IF-3 (179 aa).

Belongs to the IF-3 family. As to quaternary structure, monomer.

It is found in the cytoplasm. In terms of biological role, IF-3 binds to the 30S ribosomal subunit and shifts the equilibrium between 70S ribosomes and their 50S and 30S subunits in favor of the free subunits, thus enhancing the availability of 30S subunits on which protein synthesis initiation begins. The protein is Translation initiation factor IF-3 of Bradyrhizobium diazoefficiens (strain JCM 10833 / BCRC 13528 / IAM 13628 / NBRC 14792 / USDA 110).